Reading from the N-terminus, the 188-residue chain is Probable nicotinate-nucleotide adenylyltransferase (188 aa).

Belongs to the NadD family.

It catalyses the reaction nicotinate beta-D-ribonucleotide + ATP + H(+) = deamido-NAD(+) + diphosphate. It functions in the pathway cofactor biosynthesis; NAD(+) biosynthesis; deamido-NAD(+) from nicotinate D-ribonucleotide: step 1/1. In terms of biological role, catalyzes the reversible adenylation of nicotinate mononucleotide (NaMN) to nicotinic acid adenine dinucleotide (NaAD). The protein is Probable nicotinate-nucleotide adenylyltransferase of Listeria monocytogenes serotype 4b (strain F2365).